Consider the following 251-residue polypeptide: Probable transcriptional regulatory protein Blon_1155/BLIJ_1182 (251 aa).

This sequence belongs to the TACO1 family.

Its subcellular location is the cytoplasm. This chain is Probable transcriptional regulatory protein Blon_1155/BLIJ_1182, found in Bifidobacterium longum subsp. infantis (strain ATCC 15697 / DSM 20088 / JCM 1222 / NCTC 11817 / S12).